A 400-amino-acid polypeptide reads, in one-letter code: MTTIGTPLSPRATKVMLLGSGELGREVLIALQRLGVETIAVDRYDNAPGQQVAHHARTIAMTDPEQLRALIEAERPDLVVPEIEAIATPALEALEAEGVVTVIPTARAARLTMDREGIRRLAAETLGLPTSPYRFCDSLEELRAAIDGTVGYPCVVKPVMSSSGKGQSKIDGPEDVAPAWEYAMSGSRVSNTRIIVEGFVDFDYEITLLTVRARGASGEVQTQFCEPIGHRQVSGDYVESWQPHPMPSTALDRSRQIAKAVTENLGGQGIFGVELFVKGDDVWFSEVSPRPHDTGMVTMVTQWQNEFELHARAILGLPVDTTLKSPGASAVIYGGVDAEGVVFDGVDRALAVPHTDIRLFGKPESFVNRRMGVALAFADDVDTARRNAAEAASRVTPRAV.

N(1)-(5-phospho-beta-D-ribosyl)glycinamide-binding positions include 22-23 (EL) and Glu-82. ATP-binding positions include Arg-115, Lys-157, 162 to 167 (SSGKGQ), 197 to 200 (EGFV), and Glu-205. Residues 120 to 315 (RLAAETLGLP…EFELHARAIL (196 aa)) form the ATP-grasp domain. Glu-274 and Glu-286 together coordinate Mg(2+). N(1)-(5-phospho-beta-D-ribosyl)glycinamide-binding positions include Asp-293, Lys-362, and 369-370 (RR).

It belongs to the PurK/PurT family. In terms of assembly, homodimer.

The enzyme catalyses N(1)-(5-phospho-beta-D-ribosyl)glycinamide + formate + ATP = N(2)-formyl-N(1)-(5-phospho-beta-D-ribosyl)glycinamide + ADP + phosphate + H(+). The protein operates within purine metabolism; IMP biosynthesis via de novo pathway; N(2)-formyl-N(1)-(5-phospho-D-ribosyl)glycinamide from N(1)-(5-phospho-D-ribosyl)glycinamide (formate route): step 1/1. Involved in the de novo purine biosynthesis. Catalyzes the transfer of formate to 5-phospho-ribosyl-glycinamide (GAR), producing 5-phospho-ribosyl-N-formylglycinamide (FGAR). Formate is provided by PurU via hydrolysis of 10-formyl-tetrahydrofolate. The chain is Formate-dependent phosphoribosylglycinamide formyltransferase from Mycolicibacterium gilvum (strain PYR-GCK) (Mycobacterium gilvum (strain PYR-GCK)).